The following is a 307-amino-acid chain: METAQHQQNNQQHYLHQHLSIGQGTNIEDGSNKNNSSNFMCRQNSTRWTPTTDQIRILKDLYYNNGVRSPTAEQIQRISAKLRQYGKIEGKNVFYWFQNHKARERQKKRLIAAATTDNTNLPMQMQFQRGVWRSSADDPIHHKYTNPGVHCPSASSHGVLAVGQNGNHGYGALAMEKSFRDCSISPGSSMSHHHHQNFAWAGVDPYSSTTTYPFLEKTKHFENETLEADEEQQEEDQENYYYQRTTSAIETLPLFPMHEENISSFCNLKHQESSGGFYTEWYRADDNLAAARASLELSLNSFIGNSS.

Residues 23 to 44 (QGTNIEDGSNKNNSSNFMCRQN) are disordered. Positions 43–108 (QNSTRWTPTT…NHKARERQKK (66 aa)) form a DNA-binding region, homeobox; WUS-type.

It belongs to the WUS homeobox family. In terms of tissue distribution, in the active shoot meristem, it is specifically expressed in a small cell group underneath the presume position of stem cells.

The protein localises to the nucleus. Functionally, transcription factor that plays a central role during developmental processes such as early embryogenesis and flowering, probably by regulating expression of specific genes. Required to specify stem cell identity in meristems, such as shoot apical meristem (SAM). Acts in parallel with HAM. The chain is Protein WUSCHEL (WUS) from Petunia hybrida (Petunia).